A 178-amino-acid chain; its full sequence is Adenine phosphoribosyltransferase (178 aa).

Belongs to the purine/pyrimidine phosphoribosyltransferase family. Homodimer.

It localises to the cytoplasm. It catalyses the reaction AMP + diphosphate = 5-phospho-alpha-D-ribose 1-diphosphate + adenine. The protein operates within purine metabolism; AMP biosynthesis via salvage pathway; AMP from adenine: step 1/1. In terms of biological role, catalyzes a salvage reaction resulting in the formation of AMP, that is energically less costly than de novo synthesis. The chain is Adenine phosphoribosyltransferase from Pseudoalteromonas atlantica (strain T6c / ATCC BAA-1087).